The sequence spans 305 residues: tRNA dimethylallyltransferase 2 (305 aa).

14 to 21 (GPTASGKT) serves as a coordination point for ATP. Residue 16-21 (TASGKT) participates in substrate binding. Residues 39–42 (DSRQ) form an interaction with substrate tRNA region.

The protein belongs to the IPP transferase family. Monomer. Mg(2+) serves as cofactor.

The catalysed reaction is adenosine(37) in tRNA + dimethylallyl diphosphate = N(6)-dimethylallyladenosine(37) in tRNA + diphosphate. In terms of biological role, catalyzes the transfer of a dimethylallyl group onto the adenine at position 37 in tRNAs that read codons beginning with uridine, leading to the formation of N6-(dimethylallyl)adenosine (i(6)A). This is tRNA dimethylallyltransferase 2 from Trichlorobacter lovleyi (strain ATCC BAA-1151 / DSM 17278 / SZ) (Geobacter lovleyi).